Reading from the N-terminus, the 220-residue chain is Fructose-6-phosphate aldolase (220 aa).

The Schiff-base intermediate with substrate role is filled by K85.

It belongs to the transaldolase family. Type 3A subfamily. As to quaternary structure, homodecamer.

The protein resides in the cytoplasm. It carries out the reaction beta-D-fructose 6-phosphate = dihydroxyacetone + D-glyceraldehyde 3-phosphate. In terms of biological role, catalyzes the reversible formation of fructose 6-phosphate from dihydroxyacetone and D-glyceraldehyde 3-phosphate via an aldolization reaction. This Salmonella arizonae (strain ATCC BAA-731 / CDC346-86 / RSK2980) protein is Fructose-6-phosphate aldolase.